A 170-amino-acid polypeptide reads, in one-letter code: MPSSWKESGLRWYWVVVLVFVADQLSKQWVLANFDLRESINLLPFFNFTYVRNYGAAFSFLNDAGGWQRWLFTLVAVGFSTLLTVWLRKQPKGLWRLNLAYTLVIGGALGNLIDRLQHGFVVDFLDFYWKTSHFPAFNIADSAICVGAGLIILDSFISERKPNGEDVAKG.

Transmembrane regions (helical) follow at residues 12 to 32 (WYWVVVLVFVADQLSKQWVLA), 67 to 87 (WQRWLFTLVAVGFSTLLTVWL), and 93 to 113 (GLWRLNLAYTLVIGGALGNLI). Residues Asp-123 and Asp-141 contribute to the active site. The helical transmembrane segment at 133–153 (HFPAFNIADSAICVGAGLIIL) threads the bilayer.

Belongs to the peptidase A8 family.

The protein resides in the cell inner membrane. The enzyme catalyses Release of signal peptides from bacterial membrane prolipoproteins. Hydrolyzes -Xaa-Yaa-Zaa-|-(S,diacylglyceryl)Cys-, in which Xaa is hydrophobic (preferably Leu), and Yaa (Ala or Ser) and Zaa (Gly or Ala) have small, neutral side chains.. The protein operates within protein modification; lipoprotein biosynthesis (signal peptide cleavage). This protein specifically catalyzes the removal of signal peptides from prolipoproteins. This chain is Lipoprotein signal peptidase, found in Shewanella loihica (strain ATCC BAA-1088 / PV-4).